We begin with the raw amino-acid sequence, 238 residues long: Protein lifeguard 4 (238 aa).

Over 1–38 (MADTDPGYPRSSIEDDFNYGSCVASASVHIRMAFLRKV) the chain is Cytoplasmic. A helical membrane pass occupies residues 39–59 (YSILSLQVLLTTVTSALFLYF). The Lumenal segment spans residues 60-68 (QALRTFVHE). A helical membrane pass occupies residues 69-89 (SPALIVVFALGSLGLIFALTL). Over 90–97 (HRHTHPLN) the chain is Cytoplasmic. A helical membrane pass occupies residues 98-118 (LYLLFAFTLSESLAVAAVVTF). Residues 119–120 (YD) are Lumenal-facing. Residues 121–141 (VYLVLQAFIMTTAVFLGLTAY) form a helical membrane-spanning segment. Over 142 to 151 (TLQSKRDFTK) the chain is Cytoplasmic. The chain crosses the membrane as a helical span at residues 152-172 (FGAGLFAGLWILCLAGFLKLF). At 173-175 (FYS) the chain is on the lumenal side. The chain crosses the membrane as a helical span at residues 176–196 (ETMELVLASLGALLFCGFIIY). At 197-208 (DTHSLMHRLSPE) the chain is on the cytoplasmic side. The helical intramembrane region spans 209–229 (EYVIAAISLYMDIINLFLHLL). The Cytoplasmic portion of the chain corresponds to 230-238 (KFLEAVNKK).

This sequence belongs to the BI1 family. LFG subfamily. As to quaternary structure, interacts with ITPR3.

It localises to the golgi apparatus membrane. Functionally, anti-apoptotic protein which can inhibit apoptosis induced by intrinsic and extrinsic apoptotic stimuli. Can modulate both capacitative Ca2+ entry and inositol 1,4,5-trisphosphate (IP3)-mediated Ca2+ release. This is Protein lifeguard 4 (Tmbim4) from Mus musculus (Mouse).